Consider the following 154-residue polypeptide: Aspartate carbamoyltransferase regulatory chain (154 aa).

Residues cysteine 109, cysteine 114, cysteine 138, and cysteine 141 each coordinate Zn(2+).

Belongs to the PyrI family. As to quaternary structure, contains catalytic and regulatory chains. Requires Zn(2+) as cofactor.

Involved in allosteric regulation of aspartate carbamoyltransferase. This chain is Aspartate carbamoyltransferase regulatory chain, found in Aeromonas salmonicida (strain A449).